The following is a 764-amino-acid chain: FAST kinase domain-containing protein 5, mitochondrial (764 aa).

Residues 1-27 (MAATLKSLKLLRYQAFCSPSAFGAVRS) constitute a mitochondrion transit peptide. A disordered region spans residues 68-94 (IPTTSSARPGLEFSKTSSSKASTLQLG). A compositionally biased stretch (polar residues) spans 81-93 (SKTSSSKASTLQL). A Phosphoserine modification is found at Ser-95. At Lys-507 the chain carries N6-acetyllysine. The 61-residue stretch at 697–757 (LAIQFTNRNQ…RLEKLAFLHE (61 aa)) folds into the RAP domain.

This sequence belongs to the FAST kinase family. Found in a complex with GRSF1, DDX28, DHX30 and FASTKD2. Associates with the 12S mitochondrial rRNA (12S mt-rRNA).

The protein localises to the mitochondrion matrix. It is found in the mitochondrion nucleoid. Functionally, plays an important role in the processing of non-canonical mitochondrial mRNA precursors. The polypeptide is FAST kinase domain-containing protein 5, mitochondrial (FASTKD5) (Pongo abelii (Sumatran orangutan)).